Here is a 380-residue protein sequence, read N- to C-terminus: Probable inactive dehydrogenase easA (380 aa).

FMN contacts are provided by residues 25-27 (PMT), Ala-60, Gln-102, and His-171. Substrate-binding residues include His-171 and Asn-174. FMN contacts are provided by residues Lys-223, Gly-299, 324–325 (GR), and Arg-325. Tyr-352 is a binding site for substrate.

It belongs to the NADH:flavin oxidoreductase/NADH oxidase family.

Probable inactive dehydrogenase; part of the gene cluster that mediates the biosynthesis of fungal ergot alkaloid. DmaW catalyzes the first step of ergot alkaloid biosynthesis by condensing dimethylallyl diphosphate (DMAP) and tryptophan to form 4-dimethylallyl-L-tryptophan. The second step is catalyzed by the methyltransferase easF that methylates 4-dimethylallyl-L-tryptophan in the presence of S-adenosyl-L-methionine, resulting in the formation of 4-dimethylallyl-L-abrine. The catalase easC and the FAD-dependent oxidoreductase easE then transform 4-dimethylallyl-L-abrine to chanoclavine-I which is further oxidized by easD in the presence of NAD(+), resulting in the formation of chanoclavine-I aldehyde. Agroclavine dehydrogenase easG then mediates the conversion of chanoclavine-I aldehyde to agroclavine via a non-enzymatic adduct reaction: the substrate is an iminium intermediate that is formed spontaneously from chanoclavine-I aldehyde in the presence of glutathione. The presence of easA is not required to complete this reaction. Further conversion of agroclavine to paspalic acid is a two-step process involving oxidation of agroclavine to elymoclavine and of elymoclavine to paspalic acid, the second step being performed by the elymoclavine oxidase cloA. Paspalic acid is then further converted to D-lysergic acid. Ergopeptines are assembled from D-lysergic acid and three different amino acids by the D-lysergyl-peptide-synthetases composed each of a monomudular and a trimodular nonribosomal peptide synthetase subunit. LpsB and lpsC encode the monomodular subunits responsible for D-lysergic acid activation and incorporation into the ergopeptine backbone. LpsA1 and A2 subunits encode the trimodular nonribosomal peptide synthetase assembling the tripeptide portion of ergopeptines. LpsA1 is responsible for formation of the major ergopeptine, ergotamine, and lpsA2 for alpha-ergocryptine, the minor ergopeptine of the total alkaloid mixture elaborated by C.purpurea. D-lysergyl-tripeptides are assembled by the nonribosomal peptide synthetases and released as N-(D-lysergyl-aminoacyl)-lactams. Cyclolization of the D-lysergyl-tripeptides is performed by the Fe(2+)/2-ketoglutarate-dependent dioxygenase easH which introduces a hydroxyl group into N-(D-lysergyl-aminoacyl)-lactam at alpha-C of the aminoacyl residue followed by spontaneous condensation with the terminal lactam carbonyl group. The polypeptide is Probable inactive dehydrogenase easA (Claviceps purpurea (strain 20.1) (Ergot fungus)).